A 215-amino-acid chain; its full sequence is Protein-L-isoaspartate O-methyltransferase (215 aa).

Residue Ser62 is part of the active site.

Belongs to the methyltransferase superfamily. L-isoaspartyl/D-aspartyl protein methyltransferase family.

Its subcellular location is the cytoplasm. The enzyme catalyses [protein]-L-isoaspartate + S-adenosyl-L-methionine = [protein]-L-isoaspartate alpha-methyl ester + S-adenosyl-L-homocysteine. Catalyzes the methyl esterification of L-isoaspartyl residues in peptides and proteins that result from spontaneous decomposition of normal L-aspartyl and L-asparaginyl residues. It plays a role in the repair and/or degradation of damaged proteins. In Bradyrhizobium sp. (strain ORS 278), this protein is Protein-L-isoaspartate O-methyltransferase.